We begin with the raw amino-acid sequence, 131 residues long: Insulin-like 3 (131 aa).

The signal sequence occupies residues Met-1–Ala-24. 3 disulfide bridges follow: Cys-34-Cys-117, Cys-46-Cys-130, and Cys-116-Cys-121. Residues Pro-58–His-104 constitute a propeptide, c peptide like. Residues Ala-86–Arg-105 are disordered.

The protein belongs to the insulin family. As to quaternary structure, heterodimer of a B chain and an A chain linked by two disulfide bonds. As to expression, highest expression in the Leydig cells of the testis.

It is found in the secreted. Functionally, seems to play a role in testicular function. May be a trophic hormone with a role in testicular descent in fetal life. Is a ligand for LGR8 receptor. This is Insulin-like 3 (INSL3) from Callithrix jacchus (White-tufted-ear marmoset).